The following is a 142-amino-acid chain: Phosphoribosyl-AMP cyclohydrolase (142 aa).

Aspartate 92 is a binding site for Mg(2+). Cysteine 93 contacts Zn(2+). Residues aspartate 94 and aspartate 96 each coordinate Mg(2+). Zn(2+)-binding residues include cysteine 109 and cysteine 116.

The protein belongs to the PRA-CH family. Homodimer. Requires Mg(2+) as cofactor. The cofactor is Zn(2+).

It is found in the cytoplasm. It carries out the reaction 1-(5-phospho-beta-D-ribosyl)-5'-AMP + H2O = 1-(5-phospho-beta-D-ribosyl)-5-[(5-phospho-beta-D-ribosylamino)methylideneamino]imidazole-4-carboxamide. The protein operates within amino-acid biosynthesis; L-histidine biosynthesis; L-histidine from 5-phospho-alpha-D-ribose 1-diphosphate: step 3/9. Functionally, catalyzes the hydrolysis of the adenine ring of phosphoribosyl-AMP. This is Phosphoribosyl-AMP cyclohydrolase from Halorhodospira halophila (strain DSM 244 / SL1) (Ectothiorhodospira halophila (strain DSM 244 / SL1)).